We begin with the raw amino-acid sequence, 204 residues long: uncharacterized protein (204 aa).

H9 (tele-phosphohistidine intermediate) is an active-site residue. The active-site Proton donor/acceptor is the E86.

The protein belongs to the phosphoglycerate mutase family.

This is an uncharacterized protein from Acanthamoeba polyphaga (Amoeba).